Here is a 184-residue protein sequence, read N- to C-terminus: Photosystem I assembly protein Ycf4 (184 aa).

Helical transmembrane passes span 22-42 and 57-77; these read FCWA…GISS and IVFF…LFIS.

This sequence belongs to the Ycf4 family.

Its subcellular location is the plastid. The protein localises to the chloroplast thylakoid membrane. In terms of biological role, seems to be required for the assembly of the photosystem I complex. This chain is Photosystem I assembly protein Ycf4, found in Coffea arabica (Arabian coffee).